A 144-amino-acid chain; its full sequence is Large ribosomal subunit protein uL16 (144 aa).

The protein belongs to the universal ribosomal protein uL16 family. Part of the 50S ribosomal subunit.

Binds 23S rRNA and is also seen to make contacts with the A and possibly P site tRNAs. The protein is Large ribosomal subunit protein uL16 of Heliobacterium modesticaldum (strain ATCC 51547 / Ice1).